The chain runs to 450 residues: Protein tweety homolog 1 (450 aa).

Over 1-43 (MGAPPGYRPSAWVHLLHQLPRADFQLRPVPSGFAPRDQEYQQA) the chain is Extracellular. Residues 44-64 (LLLVAALAGLGLGLSLIFIAV) traverse the membrane as a helical segment. The Cytoplasmic segment spans residues 65-88 (YLIRFCCCRPPEPPGAKSPPPGGG). A helical transmembrane segment spans residues 89-109 (CVTWSCIAALLVGCAGIGIGF). The Extracellular portion of the chain corresponds to 110–214 (YGNSETSDGV…DVTFVEEYRW (105 aa)). A glycan (N-linked (GlcNAc...) asparagine) is linked at Asn130. The helical transmembrane segment at 215–235 (LAYVLLLLLVLLVCLFTLLGL) threads the bilayer. Over 236-240 (AKQSK) the chain is Cytoplasmic. Residues 241–261 (WLVVVMTAMSLLVLVLSWGSM) form a helical membrane-spanning segment. Over 262–390 (GLEAATAVGL…LRGLCEDALE (129 aa)) the chain is Extracellular. 2 disulfide bridges follow: Cys275-Cys385 and Cys303-Cys370. 2 N-linked (GlcNAc...) asparagine glycosylation sites follow: Asn284 and Asn355. The helical transmembrane segment at 391 to 411 (GLLFLMLFSLLSAGALATTLC) threads the bilayer. Topologically, residues 412–450 (SLPRAWALFPPSDDYDDTDDDDPFNPQESKRFVQWQSSI) are cytoplasmic. Residues 428–450 (DTDDDDPFNPQESKRFVQWQSSI) are disordered. A Phosphoserine modification is found at Ser440.

Belongs to the tweety family. As to quaternary structure, homotetramer; disulfide-linked. Homodimer. Post-translationally, N-glycosylated. Contains high-mannose, hybrid and complex oligosaccharides.

It is found in the cell membrane. The enzyme catalyses chloride(in) = chloride(out). The catalysed reaction is L-glutamate(out) = L-glutamate(in). Functionally, calcium-independent, swelling-dependent volume-regulated anion channel (VRAC-swell) which plays a pivotal role in the process of regulatory volume decrease (RVD) in the brain through the efflux of anions like chloride and organic osmolytes like glutamate. The polypeptide is Protein tweety homolog 1 (Ttyh1) (Rattus norvegicus (Rat)).